The following is a 404-amino-acid chain: Ubiquitin-like modifier-activating enzyme 5 (404 aa).

5 residues coordinate ATP: Gly-83, Asp-104, Lys-127, Asn-150, and Asn-184. Zn(2+) is bound by residues Cys-226 and Cys-229. Residue Cys-250 is the Glycyl thioester intermediate of the active site. Residues Cys-303 and Cys-308 each contribute to the Zn(2+) site. The segment at 372–393 (APEKSSETSEETVTAATADETS) is disordered. Over residues 382 to 391 (ETVTAATADE) the composition is skewed to low complexity.

Belongs to the ubiquitin-activating E1 family. UBA5 subfamily.

Functionally, E1-like enzyme which activates UFM1. In Drosophila sechellia (Fruit fly), this protein is Ubiquitin-like modifier-activating enzyme 5.